The sequence spans 137 residues: MSKDSVETNTIINTIDNTNDNTTNITKKNSVEEIITLNDFSTALGDESKGLVIIDFFTTWCGPCKRIAPDYIRMAEKYPTVSFYKINAENENLANIVAACEIVSLPTFCFFKAGKYIGRFVNADPVGLEKSIVESSQ.

The Thioredoxin domain occupies 2-137 (SKDSVETNTI…LEKSIVESSQ (136 aa)). Residues cysteine 61 and cysteine 64 each act as nucleophile in the active site. A disulfide bridge links cysteine 61 with cysteine 64.

It belongs to the thioredoxin family.

Participates in various redox reactions through the reversible oxidation of its active center dithiol to a disulfide and catalyzes dithiol-disulfide exchange reactions. The polypeptide is Thioredoxin-like protein R548 (Acanthamoeba polyphaga mimivirus (APMV)).